A 78-amino-acid polypeptide reads, in one-letter code: Conotoxin ba1890.8 (78 aa).

The signal sequence occupies residues 1-22 (MKTSGRLLFLCLAVGLLLESQA). The propeptide occupies 23–61 (HPIADAEDATRNVGSDGTSVELSEILERGQDSSAEKGQR). The disordered stretch occupies residues 25–78 (IADAEDATRNVGSDGTSVELSEILERGQDSSAEKGQRQNDHDVDESGHDIPFPS). A compositionally biased stretch (polar residues) spans 34-43 (NVGSDGTSVE). Residues 47-72 (ILERGQDSSAEKGQRQNDHDVDESGH) are compositionally biased toward basic and acidic residues. The residue at position 62 (Q62) is a Pyrrolidone carboxylic acid.

Belongs to the conotoxin H superfamily. As to expression, expressed by the venom duct.

Its subcellular location is the secreted. In terms of biological role, probable toxin. The polypeptide is Conotoxin ba1890.8 (Conus bayani (Bayan's cone)).